The sequence spans 214 residues: Chalcone isomerase-like protein 1 (214 aa).

Belongs to the chalcone isomerase family. In terms of tissue distribution, mostly expressed in glandular trichomes (lupulin glands), and, to a lower extent, in cones, cones bracts, leaves, stems and roots.

The protein localises to the cytoplasm. It carries out the reaction a chalcone = a flavanone.. Its pathway is secondary metabolite biosynthesis; flavonoid biosynthesis. Involved in the biosynthesis of prenylated phenolics natural products which contribute to the bitter taste of beer and display broad biological activities. Involved in anthocyanin biosynthesis. Polyketide binding proteins (PBP) which reduces the catalytic activities of CHS_H1 and PT1L and prevents demethylxanthohumol (DMX) production, by binding to DMX and naringenin chalcone (NC) to stabilize the chalconoids ring-opened structure. This is Chalcone isomerase-like protein 1 from Humulus lupulus (European hop).